A 438-amino-acid chain; its full sequence is Aspartate--tRNA(Asp/Asn) ligase (438 aa).

Residue E176 participates in L-aspartate binding. The interval Q198–K201 is aspartate. R220 lines the L-aspartate pocket. Residues R220–E222, R228–L230, and E361 contribute to the ATP site. Mg(2+) is bound by residues E361 and S364. Residues S364 and R368 each contribute to the L-aspartate site. G409–R412 lines the ATP pocket.

The protein belongs to the class-II aminoacyl-tRNA synthetase family. Type 2 subfamily. In terms of assembly, homodimer. Requires Mg(2+) as cofactor.

It is found in the cytoplasm. It carries out the reaction tRNA(Asx) + L-aspartate + ATP = L-aspartyl-tRNA(Asx) + AMP + diphosphate. In terms of biological role, aspartyl-tRNA synthetase with relaxed tRNA specificity since it is able to aspartylate not only its cognate tRNA(Asp) but also tRNA(Asn). Reaction proceeds in two steps: L-aspartate is first activated by ATP to form Asp-AMP and then transferred to the acceptor end of tRNA(Asp/Asn). In Methanococcus maripaludis (strain C7 / ATCC BAA-1331), this protein is Aspartate--tRNA(Asp/Asn) ligase.